The sequence spans 228 residues: Small ribosomal subunit protein uS7m (228 aa).

The N-terminal 33 residues, 1–33 (MAASVRHLLKPWTPSLCLMRWSRYNPYYLDPEP), are a transit peptide targeting the mitochondrion.

Belongs to the universal ribosomal protein uS7 family. Component of the mitochondrial ribosome small subunit (28S) which comprises a 12S rRNA and about 30 distinct proteins.

The protein resides in the mitochondrion. This Danio rerio (Zebrafish) protein is Small ribosomal subunit protein uS7m (mrps7).